We begin with the raw amino-acid sequence, 116 residues long: MGSRLSQPFESYITAPPGTAAAPAKPAPPATPGAPTSPAEHRLLKTCWSCRVLSGLGLMGAGGYVYWVARKPMKMGYPPSPWTITQMVIGLSENQGIATWGIVVMADPKGKAYRVV.

A disordered region spans residues methionine 1–alanine 39. A compositionally biased stretch (low complexity) spans threonine 14–alanine 24. The next 2 membrane-spanning stretches (helical) occupy residues valine 52–alanine 69 and tryptophan 82–valine 104.

As to quaternary structure, interacts with incompletely assembled mitochondrial NADH:ubiquinone oxidoreductase complex (complex I).

The protein resides in the mitochondrion inner membrane. Required for the assembly of the mitochondrial NADH:ubiquinone oxidoreductase complex (complex I). Involved in the assembly of the distal region of complex I. In Homo sapiens (Human), this protein is Distal membrane-arm assembly complex protein 1.